A 136-amino-acid polypeptide reads, in one-letter code: Large ribosomal subunit protein uL16 (136 aa).

This sequence belongs to the universal ribosomal protein uL16 family. Part of the 50S ribosomal subunit.

Functionally, binds 23S rRNA and is also seen to make contacts with the A and possibly P site tRNAs. This chain is Large ribosomal subunit protein uL16, found in Shewanella loihica (strain ATCC BAA-1088 / PV-4).